The following is a 204-amino-acid chain: Recombination protein RecR (204 aa).

A C4-type zinc finger spans residues 57–72; sequence CPTCFNYTDTDICRYC. The Toprim domain occupies 80–181; it reads ESICVVEEPS…KLSRIAHGVP (102 aa).

Belongs to the RecR family.

May play a role in DNA repair. It seems to be involved in an RecBC-independent recombinational process of DNA repair. It may act with RecF and RecO. This is Recombination protein RecR from Bdellovibrio bacteriovorus (strain ATCC 15356 / DSM 50701 / NCIMB 9529 / HD100).